The chain runs to 478 residues: MGRCCFYTAGTLSLLLLVTSVTLLVARVFQKAVDQTIEKNMVLQNGTKVFNSWEKPPLPVYIQFYFFNVTNPEEILQGEIPLLEEVGPYTYRELRNKANIQFGENGTTISAVTNKAYVFERNQSVGDPNVDLIRTINIPLLTVVDLAQLTLLRELIEAMLKAYQQKLFVIHTVHELLWGYKDEILSLVHIFKPDVSPNFGLFYERNGTNDGEYVFLTGEDNYLNFSKIVEWNGKTSLDWWTTDTCNMINGTDGDSFHPLISKDEVLYLFPSDLCRSVHITFSSFENVEGLPAFRYKVPAEILANTSENAGFCIPEGNCMDSGVLNISICKNGAPIIMSFPHFYQADEKFVSAIKGMHPNKEEHESFVDINPLTGIILRGAKRFQINTYVRKLDDFVETGDIRTMVFPVMYLNESVLIDKETANQLKSVINTTLVVTNIPYIIMALGVFFGLVFTWLACRGQGSMDEGTADERAPLIRT.

Over 1 to 4 (MGRC) the chain is Cytoplasmic. The chain crosses the membrane as a helical span at residues 5–27 (CFYTAGTLSLLLLVTSVTLLVAR). At 28-433 (VFQKAVDQTI…QLKSVINTTL (406 aa)) the chain is on the lumenal side. 4 N-linked (GlcNAc...) asparagine glycosylation sites follow: N45, N68, N105, and N122. An important for interaction with GBA1 region spans residues 155 to 191 (LIEAMLKAYQQKLFVIHTVHELLWGYKDEILSLVHIF). Residues N206, N224, N249, and N304 are each glycosylated (N-linked (GlcNAc...) asparagine). 2 cysteine pairs are disulfide-bonded: C274–C329 and C312–C318. N-linked (GlcNAc...) asparagine glycans are attached at residues N325, N412, and N430. Residues 434–459 (VVTNIPYIIMALGVFFGLVFTWLACR) traverse the membrane as a helical segment. The Cytoplasmic segment spans residues 460–478 (GQGSMDEGTADERAPLIRT).

This sequence belongs to the CD36 family. Interacts with GBA1. In terms of processing, acylated by palmitic acid group(s). Post-translationally, heavily glycosylated. As to expression, detected in the extracts of brain, heart, lung, liver and kidney.

The protein resides in the lysosome membrane. Acts as a lysosomal receptor for glucosylceramidase (GBA1) targeting. The polypeptide is Lysosome membrane protein 2 (Scarb2) (Mus musculus (Mouse)).